We begin with the raw amino-acid sequence, 187 residues long: Lipid A acyltransferase PagP (187 aa).

The signal sequence occupies residues 1–26 (MIVAKKYFLVLSFLFVQFALLPQAFS). Residues H59, D102, and S103 contribute to the active site.

The protein belongs to the lipid A palmitoyltransferase family. Homodimer.

The protein localises to the cell outer membrane. The enzyme catalyses a lipid A + a 1,2-diacyl-sn-glycero-3-phosphocholine = a hepta-acyl lipid A + a 2-acyl-sn-glycero-3-phosphocholine. It carries out the reaction a lipid IVA + a 1,2-diacyl-sn-glycero-3-phosphocholine = a lipid IVB + a 2-acyl-sn-glycero-3-phosphocholine. It catalyses the reaction a lipid IIA + a 1,2-diacyl-sn-glycero-3-phosphocholine = a lipid IIB + a 2-acyl-sn-glycero-3-phosphocholine. Its function is as follows. Transfers a fatty acid residue from the sn-1 position of a phospholipid to the N-linked hydroxyfatty acid chain on the proximal unit of lipid A or its precursors. This chain is Lipid A acyltransferase PagP, found in Citrobacter koseri (strain ATCC BAA-895 / CDC 4225-83 / SGSC4696).